The chain runs to 283 residues: Bis(5'-nucleosyl)-tetraphosphatase, symmetrical (283 aa).

This sequence belongs to the Ap4A hydrolase family.

The enzyme catalyses P(1),P(4)-bis(5'-adenosyl) tetraphosphate + H2O = 2 ADP + 2 H(+). Functionally, hydrolyzes diadenosine 5',5'''-P1,P4-tetraphosphate to yield ADP. In Cronobacter sakazakii (strain ATCC BAA-894) (Enterobacter sakazakii), this protein is Bis(5'-nucleosyl)-tetraphosphatase, symmetrical.